A 393-amino-acid chain; its full sequence is Dual specificity mitogen-activated protein kinase kinase 1 (393 aa).

The interval 1 to 27 is disordered; the sequence is MPKKKPTPIQLNPAPDGSAVNGTSSAE. The Protein kinase domain maps to 68–361; sequence FEKISELGAG…LKQLMVHAFI (294 aa). Residues 74–82 and lysine 97 each bind ATP; that span reads LGAGNGGVV. The active-site Proton acceptor is the aspartate 190. Phosphoserine; by RAF occurs at positions 218 and 222. An RAF1-binding region spans residues 270 to 307; sequence ELELMFGCQVEGDAAETPPRPRTPGRPLSSYGMDSRPP. Residue threonine 286 is modified to Phosphothreonine. The residue at position 292 (threonine 292) is a Phosphothreonine; by MAPK1. The residue at position 298 (serine 298) is a Phosphoserine; by PAK.

The protein belongs to the protein kinase superfamily. STE Ser/Thr protein kinase family. MAP kinase kinase subfamily. In terms of assembly, found in a complex with at least BRAF, HRAS, MAP2K1, MAPK3/ERK1 and RGS14. Forms a heterodimer with MAP2K2/MEK2. Forms heterodimers with KSR2 which further dimerize to form tetramers. Interacts with KSR1 or KSR2 and BRAF; the interaction with KSR1 or KSR2 mediates KSR1-BRAF or KSR2-BRAF dimerization. Interacts with ARBB2, LAMTOR3, MAPK1/ERK2 and RAF1. Interacts with MAPK1/ERK2. Interacts with MORG1. Interacts with PPARG. Interacts with SGK1. Interacts with BIRC6/bruce. Interacts with KAT7; the interaction promotes KAT7 phosphorylation. Interacts with RAF1 and NEK10; the interaction is required for ERK1/2-signaling pathway activation in response to UV irradiation. Interacts with TRAF3IP3. Interacts with MOS. In terms of processing, phosphorylation at Ser-218 and Ser-222 by MAP kinase kinase kinases (RAF or MEKK1) positively regulates the kinase activity. Also phosphorylated at Thr-292 by MAPK1/ERK2 and at Ser-298 by PAK. MAPK1/ERK2 phosphorylation of Thr-292 occurs in response to cellular adhesion and leads to inhibition of Ser-298 phosphorylation by PAK. Autophosphorylated at Ser-218 and Ser-222, autophosphosphorylation is promoted by NEK10 following UV irradiation.

It localises to the cytoplasm. Its subcellular location is the cytoskeleton. The protein resides in the microtubule organizing center. It is found in the centrosome. The protein localises to the spindle pole body. It localises to the nucleus. Its subcellular location is the membrane. The catalysed reaction is L-seryl-[protein] + ATP = O-phospho-L-seryl-[protein] + ADP + H(+). It catalyses the reaction L-threonyl-[protein] + ATP = O-phospho-L-threonyl-[protein] + ADP + H(+). The enzyme catalyses L-tyrosyl-[protein] + ATP = O-phospho-L-tyrosyl-[protein] + ADP + H(+). With respect to regulation, ras proteins such as HRAS mediate the activation of RAF proteins such as RAF1 or BRAF which in turn activate extracellular signal-regulated kinases (ERK) through MAPK (mitogen-activated protein kinases) and ERK kinases MAP2K1/MEK1 and MAP2K2/MEK2. Activation occurs through phosphorylation of Ser-218 and Ser-222. MAP2K1/MEK1 binds KSR1 or KSR2 releasing the inhibitory intramolecular interaction between KSR1 or KSR2 protein kinase and N-terminal domains. This allows KSR1 or KSR2 dimerization with BRAF leading to BRAF activation and phosphorylation of MAP2K1. MAP2K1/MEK1 is also the target of negative feed-back regulation by its substrate kinases, such as MAPK1/ERK2. These phosphorylate MAP2K1/MEK1 on Thr-292, thereby facilitating dephosphorylation of the activating residues Ser-218 and Ser-222. Inhibited by serine/threonine phosphatase 2A. In terms of biological role, dual specificity protein kinase which acts as an essential component of the MAP kinase signal transduction pathway. Binding of extracellular ligands such as growth factors, cytokines and hormones to their cell-surface receptors activates RAS and this initiates RAF1 activation. RAF1 then further activates the dual-specificity protein kinases MAP2K1/MEK1 and MAP2K2/MEK2. Both MAP2K1/MEK1 and MAP2K2/MEK2 function specifically in the MAPK/ERK cascade, and catalyze the concomitant phosphorylation of a threonine and a tyrosine residue in a Thr-Glu-Tyr sequence located in the extracellular signal-regulated kinases MAPK3/ERK1 and MAPK1/ERK2, leading to their activation and further transduction of the signal within the MAPK/ERK cascade. Activates BRAF in a KSR1 or KSR2-dependent manner; by binding to KSR1 or KSR2 releases the inhibitory intramolecular interaction between KSR1 or KSR2 protein kinase and N-terminal domains which promotes KSR1 or KSR2-BRAF dimerization and BRAF activation. Depending on the cellular context, this pathway mediates diverse biological functions such as cell growth, adhesion, survival and differentiation, predominantly through the regulation of transcription, metabolism and cytoskeletal rearrangements. One target of the MAPK/ERK cascade is peroxisome proliferator-activated receptor gamma (PPARG), a nuclear receptor that promotes differentiation and apoptosis. MAP2K1/MEK1 has been shown to export PPARG from the nucleus. The MAPK/ERK cascade is also involved in the regulation of endosomal dynamics, including lysosome processing and endosome cycling through the perinuclear recycling compartment (PNRC), as well as in the fragmentation of the Golgi apparatus during mitosis. The chain is Dual specificity mitogen-activated protein kinase kinase 1 (MAP2K1) from Oryctolagus cuniculus (Rabbit).